The primary structure comprises 420 residues: MTKWKRANPNGTRDYLFEECTLIEEVEQKLRRTFLERGYEEIRTPTIEFYDVFAFQNRPIDEEKMYKFFDEKGRIIVLRPDMTIPLARVIGTQRGDIPLKVTYSGNVFRANESLTGKYNEIVQSGIEIIGIENVRAEIECVISVIQALQKLKVQSFTIEIGQVQLYKCIVKKLPINDEEEKLLRTYIESKNYAALSHFIEEKKLNRCDETVRLLEKLPRLFGSLDVVEEAEKLASSNEMKMAIARVKEIYETIEQLGYGSYISIDLGMVQHLDYYTGVIFKGYIYEIGEEIVSGGRYDELIGNFGEMMPAVGLAVQVNQIVKALQEQQEPYKRKRIDIMIHYELNRLAEAERLRNLLQKDGKNAQLSLFSNLNDTFQFANKNKIMTVVEAKSESLVEYVWREKWIIQKEGEASCVTFKLR.

The protein belongs to the class-II aminoacyl-tRNA synthetase family. HisZ subfamily. In terms of assembly, heteromultimer composed of HisG and HisZ subunits.

Its subcellular location is the cytoplasm. It functions in the pathway amino-acid biosynthesis; L-histidine biosynthesis; L-histidine from 5-phospho-alpha-D-ribose 1-diphosphate: step 1/9. Its function is as follows. Required for the first step of histidine biosynthesis. May allow the feedback regulation of ATP phosphoribosyltransferase activity by histidine. The protein is ATP phosphoribosyltransferase regulatory subunit of Bacillus mycoides (strain KBAB4) (Bacillus weihenstephanensis).